The sequence spans 448 residues: uncharacterized protein (448 aa).

Residues 4–155 enclose the uDENN domain; it reads QAIVLATFDA…SAVNLEFDSL (152 aa). The region spanning 183 to 326 is the cDENN domain; the sequence is LDHLGPAFYC…FKGLSRYLSF (144 aa). Positions 328–428 constitute a dDENN domain; the sequence is GESSWGLTTY…WQYGKYFWLR (101 aa). The chain crosses the membrane as a helical span at residues 425–447; that stretch reads FWLRRVSLIFLASTCFLFILWKL.

It localises to the golgi apparatus membrane. The protein resides in the endoplasmic reticulum membrane. This is an uncharacterized protein from Schizosaccharomyces pombe (strain 972 / ATCC 24843) (Fission yeast).